The sequence spans 122 residues: Large ribosomal subunit protein bL17 (122 aa).

It belongs to the bacterial ribosomal protein bL17 family. As to quaternary structure, part of the 50S ribosomal subunit. Contacts protein L32.

This is Large ribosomal subunit protein bL17 from Neisseria meningitidis serogroup B (strain ATCC BAA-335 / MC58).